The following is a 348-amino-acid chain: NADH-ubiquinone oxidoreductase chain 2 (348 aa).

A run of 11 helical transmembrane segments spans residues 3–23 (PYVL…TFAS), 25–45 (HWLL…RLMA), 60–80 (FLTQ…NAWA), 99–119 (MMAL…PEVL), 122–142 (LDLT…FALI), 150–170 (NPML…WGGL), 178–196 (ILAY…ILQY), 200–219 (LTLI…FLSL), 246–266 (LTLL…KWLI), 274–294 (DLPA…YFYL), and 328–348 (LMMI…ALFF).

This sequence belongs to the complex I subunit 2 family.

It localises to the mitochondrion inner membrane. The catalysed reaction is a ubiquinone + NADH + 5 H(+)(in) = a ubiquinol + NAD(+) + 4 H(+)(out). Functionally, core subunit of the mitochondrial membrane respiratory chain NADH dehydrogenase (Complex I) that is believed to belong to the minimal assembly required for catalysis. Complex I functions in the transfer of electrons from NADH to the respiratory chain. The immediate electron acceptor for the enzyme is believed to be ubiquinone. This Formosania lacustris (Oriental stream loach) protein is NADH-ubiquinone oxidoreductase chain 2 (MT-ND2).